The chain runs to 173 residues: SKP1-like protein 1 (173 aa).

Residues 115–173 (ILAANYLNIKGLLDLTCQTVADMIKGKTPEEIRKTFNIKNDFTPEEEEEIRRENQWAFE) form an interaction with the F-box domain of F-box proteins region.

The protein belongs to the SKP1 family. As to quaternary structure, part of a SCF (SKP1-CUL1-F-box protein) E3 ubiquitin-protein ligase complex. Interacts directly with MOF (via F-box domain). Interacts with rice black streaked dwarf virus RBSDV protein P7-2. Is able to form the SCF complex together with CUL1 and the viral P7-2 protein. Interacts with D3.

The protein resides in the nucleus. Its pathway is protein modification; protein ubiquitination. Involved in ubiquitination and subsequent proteasomal degradation of target proteins. Together with CUL1, a RING-box and a F-box protein, it forms a SCF E3 ubiquitin ligase complex. The functional specificity of this complex depends on the type of F-box protein. In the SCF complex, it serves as an adapter that links the F-box protein to CUL1. The protein is SKP1-like protein 1 of Oryza sativa subsp. japonica (Rice).